The chain runs to 836 residues: Neuroligin-2 (836 aa).

The first 14 residues, 1 to 14 (MWLLALCLVGLAGA), serve as a signal peptide directing secretion. Over 15–678 (QRGGGGPGGG…DSRDYSTELS (664 aa)) the chain is Extracellular. N-linked (GlcNAc...) asparagine glycosylation is found at Asn98 and Asn136. 3 cysteine pairs are disulfide-bonded: Cys106–Cys141, Cys317–Cys328, and Cys487–Cys521. Asn522 carries an N-linked (GlcNAc...) asparagine glycan. A disordered region spans residues 623–661 (PPYATRWPPRTPGPGTSGTRRPPPPATLPPESDIDLGPR). The helical transmembrane segment at 679-699 (VTVAVGASLLFLNILAFAALY) threads the bilayer. The segment at 679–699 (VTVAVGASLLFLNILAFAALY) is required for interaction with LHFPL4. At 700–836 (YKRDRRQELR…LPHPHSTTRV (137 aa)) the chain is on the cytoplasmic side. Disordered regions lie at residues 711–735 (RRLSPPGGSGSGVPGGGPLLPTAGR) and 791–836 (LLPS…TTRV). 2 positions are modified to phosphoserine: Ser714 and Ser719. Positions 717–728 (GGSGSGVPGGGP) are enriched in gly residues. Residues 796 to 819 (LGPPPPPPPPSLHPFGPFPPPPPT) are compositionally biased toward pro residues. The segment covering 824–836 (NNTLPHPHSTTRV) has biased composition (polar residues).

It belongs to the type-B carboxylesterase/lipase family. As to quaternary structure, interacts with neurexins NRXN1, NRXN2 and NRXN3. Interaction with neurexins is mediated by heparan sulfate glycan modification on neurexin. Interacts (via its C-terminus) with DLG4/PSD-95 (via PDZ domain 3). Interacts with PATJ. Interacts with GPHN. Interacts with MDGA1 and MDGA2. Found in a complex with MAGI2 and IGSF9B, where it interacts with MAGI2 (via WW 1, WW 2 and PDZ 2 domains). Identified in a complex of 720 kDa composed of LHFPL4, NLGN2, GABRA1, GABRB2, GABRG2 and GABRB3. Interacts with LHFPL4; leading to mutual regulation of the protein level and synaptic clustering. Interacts with GABRA1. Detected on hippocampus neurons, especially at inhibitory synapses. Detected in retina, in the outer and inner plexiform layer. Detected in pancreas, in islet of Langerhans beta cells (at protein level). Expressed in brain, spinal cord and dorsal root ganglion. Detected in brain, and at lower levels in pancreas islet beta cells.

The protein localises to the cell membrane. It localises to the postsynaptic cell membrane. The protein resides in the presynaptic cell membrane. In terms of biological role, transmembrane scaffolding protein involved in cell-cell interactions via its interactions with neurexin family members. Mediates cell-cell interactions both in neurons and in other types of cells, such as Langerhans beta cells. Plays a role in synapse function and synaptic signal transmission, especially via gamma-aminobutyric acid receptors (GABA(A) receptors). Functions by recruiting and clustering synaptic proteins. Promotes clustering of postsynaptic GABRG2 and GPHN. Promotes clustering of postsynaptic LHFPL4. Modulates signaling by inhibitory synapses, and thereby plays a role in controlling the ratio of signaling by excitatory and inhibitory synapses and information processing. Required for normal signal amplitude from inhibitory synapses, but is not essential for normal signal frequency. May promote the initial formation of synapses, but is not essential for this. In vitro, triggers the de novo formation of presynaptic structures. Mediates cell-cell interactions between Langerhans beta cells and modulates insulin secretion. This chain is Neuroligin-2 (Nlgn2), found in Rattus norvegicus (Rat).